The primary structure comprises 299 residues: Formin-like protein 12 (299 aa).

The 295-residue stretch at 1 to 295 folds into the FH2 domain; sequence MASNCEKMLS…LEKRKMNIKQ (295 aa).

Belongs to the formin-like family. Class-II subfamily.

The sequence is that of Formin-like protein 12 (FH12) from Arabidopsis thaliana (Mouse-ear cress).